Consider the following 110-residue polypeptide: Late cornified envelope protein 1A (110 aa).

The span at 1 to 10 shows a compositional bias: low complexity; that stretch reads MSCQQSQQQC. 2 disordered regions span residues 1 to 23 and 83 to 110; these read MSCQ…CPPK and QSSG…GGCC. The segment covering 11 to 23 has biased composition (pro residues); it reads QPPPKCTPKCPPK. Residues 83–95 are compositionally biased toward low complexity; the sequence is QSSGCCSQPSGGS. The span at 96-110 shows a compositional bias: gly residues; sequence SCCGGDSGQHSGGCC.

It belongs to the LCE family. Interacts with CYSRT1. As to expression, skin-specific. Expression was readily detected in adult trunk skin, adult arm skin, fetal skin, penal skin, vulva, esophagus and tongue. Not expressed in the cervix, rectum, lung, colon, or placenta.

In terms of biological role, precursors of the cornified envelope of the stratum corneum. The sequence is that of Late cornified envelope protein 1A (LCE1A) from Homo sapiens (Human).